The following is a 1117-amino-acid chain: Protein cup (1117 aa).

Residues 1–106 (MQMAEAEQEN…PPPPPPLPTS (106 aa)) are disordered. 2 stretches are compositionally biased toward pro residues: residues 54 to 64 (YPPPPPPPTPV) and 95 to 104 (CAPPPPPPLP). 2 positions are modified to phosphoserine: Ser-263 and Ser-270. The interval 270-326 (SPRKQVASKEAVPEQQSSQVQQKRPPSTGIHKPGSLRAPKAVRPTTAPVVSSKPVKS) is disordered. Over residues 283-294 (EQQSSQVQQKRP) the composition is skewed to polar residues. A YXXXXLphi motif 1 motif is present at residues 327–333 (YTRSRLM). Phosphoserine is present on residues Ser-347 and Ser-350. A YXXXXLphi motif 2 motif is present at residues 363-369 (ELEGRLR). 6 disordered regions span residues 493-528 (ISSQ…EDLS), 596-618 (KEGN…KMDH), 654-673 (TEHQ…SFQF), 679-728 (SQQN…SSSS), 984-1004 (GAKH…QARP), and 1016-1051 (ISGG…FQSF). At Thr-503 the chain carries Phosphothreonine. Residues Ser-509, Ser-513, Ser-520, Ser-523, and Ser-524 each carry the phosphoserine modification. Composition is skewed to low complexity over residues 679–712 (SQQN…NTNN) and 988–1001 (QAQQ…QQRQ).

Belongs to the 4E-T/EIF4E-T family. Component of the osk RNP complex, which is composed of at least exu, yps, aret/bruno, cup, and the mRNA of osk. Interacts with the decapping activators me31B and tral. Component of the nanos RNP complex, which is composed of at least smg, cup, tral, me31B, the CCR4-NOT complex members Rga/NOT2 and Caf1, and the mRNA of nanos (nos). Interacts with btz. Recruited to the 3'-UTR of nos and osk mRNAs by smg and btz, respectively. Forms a ribonucleoprotein complex (RNP) containing at least me31B, eIF4E1, cup, tral and pAbp; this interaction is required for the translational silencing of maternal mRNAs during the maternal-to-zygotic transition. No interaction was detected with pAbp in 1-5 hour embryos. Interacts with osk and vas. Interacts with Pop2, twin/CCR4, Rga, Not3 and Not1 which are all core components of the CCR4-NOT deadenylase complex; interaction with the complex is required for cup deadenylation activity. Interacts with nanos. Interacts with smg. Interacts (via YXXXXLphi motifs) with eIF4E1; the interaction promotes retention of cup in the cytoplasm. Interacts with orb; the interaction represses the orb positive autoregulatory loop. Interacts with Nup154. In terms of tissue distribution, predominantly expressed in ovaries and in 0-2 hours old embryos. Weakly expressed in testis. Expressed in young embryos through stage 9, then it decreases throughout the rest of embryogenesis. In ovaries, it is expressed in germ cells throughout pre-vitellogenic development, but is not expressed in the somatic follicle cells. In germarial cysts, the protein (and not the transcripts) is transported selectively into the oocyte.

It is found in the cytoplasm. Its subcellular location is the nucleus. It localises to the cytoplasmic ribonucleoprotein granule. Adapter protein that plays a central role in localization of transcripts in the oocyte and in young embryos. Maintains RNA targets in a repressed state by promoting their deadenylation and protects deadenylated mRNAs from further degradation. Binds to and recruits eIF-4E to the 3'-UTR of some mRNA targets which prevents interaction between eIF4E1 and eIF4G. This may contribute to translational repression but does not appear to be necessary for it to occur. Can promote translational repression independently of deadenylation and eIF4E1 binding. Required for correct localization of eIF4E1 in the developing oocyte. Required for translational repression of oskar (osk) mRNA. Also required for the translational repression of nanos (nos) mRNA. Promotes the accumulation of the germ plasm components osk, vas and stau at the posterior pole of the oocyte and is required for germ cell development. Represses orb positive autoregulatory activity which prevents premature activation of orb and ensures its accumulation specifically in the developing oocyte. In 0-1 hour embryos, forms a complex with me31B, cup, tral and pAbp which binds to various mRNAs including maternal mRNAs, and down-regulates their expression during the maternal-to-zygotic transition. This is Protein cup (cup) from Drosophila melanogaster (Fruit fly).